A 492-amino-acid chain; its full sequence is Protein nucleotidyltransferase YdiU (492 aa).

8 residues coordinate ATP: G91, G93, R94, K114, D126, G127, R177, and R184. The active-site Proton acceptor is the D253. Mg(2+)-binding residues include N254 and D263. D263 contributes to the ATP binding site.

This sequence belongs to the SELO family. It depends on Mg(2+) as a cofactor. Mn(2+) serves as cofactor.

The catalysed reaction is L-seryl-[protein] + ATP = 3-O-(5'-adenylyl)-L-seryl-[protein] + diphosphate. It catalyses the reaction L-threonyl-[protein] + ATP = 3-O-(5'-adenylyl)-L-threonyl-[protein] + diphosphate. The enzyme catalyses L-tyrosyl-[protein] + ATP = O-(5'-adenylyl)-L-tyrosyl-[protein] + diphosphate. It carries out the reaction L-histidyl-[protein] + UTP = N(tele)-(5'-uridylyl)-L-histidyl-[protein] + diphosphate. The catalysed reaction is L-seryl-[protein] + UTP = O-(5'-uridylyl)-L-seryl-[protein] + diphosphate. It catalyses the reaction L-tyrosyl-[protein] + UTP = O-(5'-uridylyl)-L-tyrosyl-[protein] + diphosphate. Nucleotidyltransferase involved in the post-translational modification of proteins. It can catalyze the addition of adenosine monophosphate (AMP) or uridine monophosphate (UMP) to a protein, resulting in modifications known as AMPylation and UMPylation. The chain is Protein nucleotidyltransferase YdiU from Maridesulfovibrio salexigens (strain ATCC 14822 / DSM 2638 / NCIMB 8403 / VKM B-1763) (Desulfovibrio salexigens).